A 208-amino-acid chain; its full sequence is Probable GTP-binding protein EngB (208 aa).

The EngB-type G domain occupies 23–205; it reads LTSEMVILGR…RQTLLKYLLT (183 aa). GTP contacts are provided by residues 31-38, 57-61, 84-87, 154-157, and 182-184; these read GRSNVGKS, GKTRL, DLPG, TKFD, and FNA. 2 residues coordinate Mg(2+): Ser-38 and Thr-59.

This sequence belongs to the TRAFAC class TrmE-Era-EngA-EngB-Septin-like GTPase superfamily. EngB GTPase family. Mg(2+) is required as a cofactor.

In terms of biological role, necessary for normal cell division and for the maintenance of normal septation. This chain is Probable GTP-binding protein EngB, found in Helicobacter pylori (strain J99 / ATCC 700824) (Campylobacter pylori J99).